The sequence spans 250 residues: Endonuclease NucS 2 (250 aa).

Belongs to the NucS endonuclease family.

Its subcellular location is the cytoplasm. Functionally, cleaves both 3' and 5' ssDNA extremities of branched DNA structures. This is Endonuclease NucS 2 from Halobacterium salinarum (strain ATCC 700922 / JCM 11081 / NRC-1) (Halobacterium halobium).